Here is a 600-residue protein sequence, read N- to C-terminus: Adenine deaminase 3 (600 aa).

It belongs to the metallo-dependent hydrolases superfamily. Adenine deaminase family. It depends on Mn(2+) as a cofactor.

The catalysed reaction is adenine + H2O + H(+) = hypoxanthine + NH4(+). In Rhizobium johnstonii (strain DSM 114642 / LMG 32736 / 3841) (Rhizobium leguminosarum bv. viciae), this protein is Adenine deaminase 3.